A 227-amino-acid chain; its full sequence is Small ribosomal subunit protein uS3 (227 aa).

Positions V39 to R107 constitute a KH type-2 domain.

Belongs to the universal ribosomal protein uS3 family. As to quaternary structure, part of the 30S ribosomal subunit. Forms a tight complex with proteins S10 and S14.

Binds the lower part of the 30S subunit head. Binds mRNA in the 70S ribosome, positioning it for translation. This chain is Small ribosomal subunit protein uS3 (rpsC), found in Coxiella burnetii (strain RSA 493 / Nine Mile phase I).